We begin with the raw amino-acid sequence, 406 residues long: Ribose-phosphate pyrophosphokinase 3, mitochondrial (406 aa).

Residues 1–32 (MAATPHRHLLQPCKNPAISSSETLKPSSSFSL) form a disordered region. A mitochondrion-targeting transit peptide spans 1-87 (MAATPHRHLL…RRFQMSSNQE (87 aa)). Residues 18-32 (ISSSETLKPSSSFSL) are compositionally biased toward low complexity. Mg(2+)-binding residues include D226 and H228. Residues 309–324 (GRHVVIVDDLVQSGGT) are binding of phosphoribosylpyrophosphate.

Belongs to the ribose-phosphate pyrophosphokinase family.

The protein resides in the mitochondrion. The enzyme catalyses D-ribose 5-phosphate + ATP = 5-phospho-alpha-D-ribose 1-diphosphate + AMP + H(+). In Spinacia oleracea (Spinach), this protein is Ribose-phosphate pyrophosphokinase 3, mitochondrial (PRS3).